The primary structure comprises 352 residues: Farnesyl pyrophosphate synthase (352 aa).

Lys52, Arg55, and Gln93 together coordinate isopentenyl diphosphate. Mg(2+) contacts are provided by Asp100 and Asp104. Residue Arg109 participates in dimethylallyl diphosphate binding. Residue Arg110 participates in isopentenyl diphosphate binding. Positions 197, 198, 237, 254, and 263 each coordinate dimethylallyl diphosphate.

It belongs to the FPP/GGPP synthase family. It depends on Mg(2+) as a cofactor.

It carries out the reaction isopentenyl diphosphate + dimethylallyl diphosphate = (2E)-geranyl diphosphate + diphosphate. The enzyme catalyses isopentenyl diphosphate + (2E)-geranyl diphosphate = (2E,6E)-farnesyl diphosphate + diphosphate. Its pathway is isoprenoid biosynthesis; farnesyl diphosphate biosynthesis; farnesyl diphosphate from geranyl diphosphate and isopentenyl diphosphate: step 1/1. It functions in the pathway isoprenoid biosynthesis; geranyl diphosphate biosynthesis; geranyl diphosphate from dimethylallyl diphosphate and isopentenyl diphosphate: step 1/1. In terms of biological role, farnesyl pyrophosphate synthase; part of the second module of ergosterol biosynthesis pathway that includes the middle steps of the pathway. ERG20 catalyzes the sequential condensation of isopentenyl pyrophosphate with dimethylallyl pyrophosphate, and then with the resultant geranylpyrophosphate to the ultimate product farnesyl pyrophosphate. The second module is carried out in the vacuole and involves the formation of farnesyl diphosphate, which is also an important intermediate in the biosynthesis of ubiquinone, dolichol, heme and prenylated proteins. Activity by the mevalonate kinase ERG12 first converts mevalonate into 5-phosphomevalonate. 5-phosphomevalonate is then further converted to 5-diphosphomevalonate by the phosphomevalonate kinase ERG8. The diphosphomevalonate decarboxylase MVD1/ERG19 then produces isopentenyl diphosphate. The isopentenyl-diphosphate delta-isomerase IDI1 then catalyzes the 1,3-allylic rearrangement of the homoallylic substrate isopentenyl (IPP) to its highly electrophilic allylic isomer, dimethylallyl diphosphate (DMAPP). Finally the farnesyl diphosphate synthase ERG20 catalyzes the sequential condensation of isopentenyl pyrophosphate with dimethylallyl pyrophosphate, and then with the resultant geranylpyrophosphate to the ultimate product farnesyl pyrophosphate. This chain is Farnesyl pyrophosphate synthase (ERG20), found in Saccharomyces cerevisiae (strain ATCC 204508 / S288c) (Baker's yeast).